The following is a 332-amino-acid chain: L-lactate dehydrogenase A chain (332 aa).

Residue Ala2 is modified to N-acetylalanine. Lys5 carries the N6-acetyllysine; alternate modification. An N6-succinyllysine; alternate modification is found at Lys5. Lys14 bears the N6-acetyllysine mark. A Phosphothreonine modification is found at Thr18. 29–57 contributes to the NAD(+) binding site; the sequence is GAVGMACAISILMKDLADELALVDVIEDK. At Lys57 the chain carries N6-acetyllysine; alternate. A Glycyl lysine isopeptide (Lys-Gly) (interchain with G-Cter in SUMO2); alternate cross-link involves residue Lys57. At Lys81 the chain carries N6-acetyllysine. Arg99 contributes to the NAD(+) binding site. Substrate is bound at residue Arg106. Lys118 carries the post-translational modification N6-acetyllysine; alternate. The residue at position 118 (Lys118) is an N6-succinyllysine; alternate. The residue at position 126 (Lys126) is an N6-acetyllysine. Asn138 lines the NAD(+) pocket. 2 residues coordinate substrate: Asn138 and Arg169. Residue His193 is the Proton acceptor of the active site. Lys224 and Lys232 each carry N6-acetyllysine. The residue at position 239 (Tyr239) is a Phosphotyrosine. Lys243 is subject to N6-acetyllysine. Thr248 contacts substrate. Residue Thr309 is modified to Phosphothreonine. The residue at position 318 (Lys318) is an N6-acetyllysine; alternate. At Lys318 the chain carries N6-succinyllysine; alternate. At Thr322 the chain carries Phosphothreonine.

Belongs to the LDH/MDH superfamily. LDH family. As to quaternary structure, homotetramer. Interacts with PTEN upstream reading frame protein MP31. In terms of processing, ISGylated.

It localises to the cytoplasm. The catalysed reaction is (S)-lactate + NAD(+) = pyruvate + NADH + H(+). Its pathway is fermentation; pyruvate fermentation to lactate; (S)-lactate from pyruvate: step 1/1. Functionally, interconverts simultaneously and stereospecifically pyruvate and lactate with concomitant interconversion of NADH and NAD(+). This chain is L-lactate dehydrogenase A chain (LDHA), found in Macaca fascicularis (Crab-eating macaque).